The following is a 96-amino-acid chain: MNLRPLQDRIIVKRVEEATMTAGGLYIPETAKEKPQQGEVVAVGNGKRGDDGKVYPIDLKVGDKVLFGKYAGSEVKLEGEDFLIMREDDILGVVEK.

The protein belongs to the GroES chaperonin family. Heptamer of 7 subunits arranged in a ring. Interacts with the chaperonin GroEL.

The protein localises to the cytoplasm. In terms of biological role, together with the chaperonin GroEL, plays an essential role in assisting protein folding. The GroEL-GroES system forms a nano-cage that allows encapsulation of the non-native substrate proteins and provides a physical environment optimized to promote and accelerate protein folding. GroES binds to the apical surface of the GroEL ring, thereby capping the opening of the GroEL channel. The sequence is that of Co-chaperonin GroES from Geobacter sp. (strain M21).